We begin with the raw amino-acid sequence, 452 residues long: Translation initiation factor eIF2B subunit gamma (452 aa).

M1 carries the N-acetylmethionine modification. S260 is modified (phosphoserine).

The protein belongs to the eIF-2B gamma/epsilon subunits family. As to quaternary structure, component of the translation initiation factor 2B (eIF2B) complex which is a heterodecamer of two sets of five different subunits: alpha, beta, gamma, delta and epsilon. Subunits alpha, beta and delta comprise a regulatory subcomplex and subunits epsilon and gamma comprise a catalytic subcomplex. Within the complex, the hexameric regulatory complex resides at the center, with the two heterodimeric catalytic subcomplexes bound on opposite sides.

The protein localises to the cytoplasm. It localises to the cytosol. Activated by the chemical integrated stress response (ISR) inhibitor ISRIB which stimulates guanine nucleotide exchange factor activity for both phosphorylated and unphosphorylated eIF2. Functionally, acts as a component of the translation initiation factor 2B (eIF2B) complex, which catalyzes the exchange of GDP for GTP on the eukaryotic initiation factor 2 (eIF2) complex gamma subunit. Its guanine nucleotide exchange factor activity is repressed when bound to eIF2 complex phosphorylated on the alpha subunit, thereby limiting the amount of methionyl-initiator methionine tRNA available to the ribosome and consequently global translation is repressed. The sequence is that of Translation initiation factor eIF2B subunit gamma (EIF2B3) from Macaca fascicularis (Crab-eating macaque).